A 158-amino-acid polypeptide reads, in one-letter code: Phosphopantetheine adenylyltransferase (158 aa).

This sequence belongs to the eukaryotic CoaD family.

The protein resides in the cytoplasm. It catalyses the reaction (R)-4'-phosphopantetheine + ATP + H(+) = 3'-dephospho-CoA + diphosphate. It participates in cofactor biosynthesis; coenzyme A biosynthesis. In terms of biological role, reversibly transfers an adenylyl group from ATP to 4'-phosphopantetheine, yielding dephospho-CoA (dPCoA) and pyrophosphate. The chain is Phosphopantetheine adenylyltransferase from Pyrococcus horikoshii (strain ATCC 700860 / DSM 12428 / JCM 9974 / NBRC 100139 / OT-3).